Consider the following 71-residue polypeptide: Bowman-Birk type trypsin inhibitor (71 aa).

Cystine bridges form between cysteine 10–cysteine 67, cysteine 11–cysteine 27, cysteine 14–cysteine 63, cysteine 17–cysteine 25, cysteine 35–cysteine 42, and cysteine 39–cysteine 55.

Belongs to the Bowman-Birk serine protease inhibitor family.

Inhibits trypsin but not chymotrypsin. The polypeptide is Bowman-Birk type trypsin inhibitor (Triticum aestivum (Wheat)).